Reading from the N-terminus, the 491-residue chain is 3-octaprenyl-4-hydroxybenzoate carboxy-lyase (491 aa).

Asparagine 176 lines the Mn(2+) pocket. Prenylated FMN is bound by residues 179-181, 193-195, and 198-199; these read IYR, RWL, and RG. Residue glutamate 242 participates in Mn(2+) binding. Residue aspartate 291 is the Proton donor of the active site.

It belongs to the UbiD family. Homohexamer. Prenylated FMN is required as a cofactor. It depends on Mn(2+) as a cofactor.

The protein resides in the cell membrane. It catalyses the reaction a 4-hydroxy-3-(all-trans-polyprenyl)benzoate + H(+) = a 2-(all-trans-polyprenyl)phenol + CO2. It participates in cofactor biosynthesis; ubiquinone biosynthesis. In terms of biological role, catalyzes the decarboxylation of 3-octaprenyl-4-hydroxy benzoate to 2-octaprenylphenol, an intermediate step in ubiquinone biosynthesis. The chain is 3-octaprenyl-4-hydroxybenzoate carboxy-lyase from Chromobacterium violaceum (strain ATCC 12472 / DSM 30191 / JCM 1249 / CCUG 213 / NBRC 12614 / NCIMB 9131 / NCTC 9757 / MK).